The primary structure comprises 578 residues: NADH-quinone oxidoreductase subunit C/D (578 aa).

Residues 1–167 (MILSLFKLFG…DEFYFTKQKE (167 aa)) are NADH dehydrogenase I subunit C. An NADH dehydrogenase I subunit D region spans residues 192 to 578 (EYMFLNFGPN…IDFVMSDVDR (387 aa)).

The protein in the N-terminal section; belongs to the complex I 30 kDa subunit family. This sequence in the C-terminal section; belongs to the complex I 49 kDa subunit family. In terms of assembly, NDH-1 is composed of 13 different subunits. Subunits NuoB, CD, E, F, and G constitute the peripheral sector of the complex.

The protein localises to the cell inner membrane. The catalysed reaction is a quinone + NADH + 5 H(+)(in) = a quinol + NAD(+) + 4 H(+)(out). NDH-1 shuttles electrons from NADH, via FMN and iron-sulfur (Fe-S) centers, to quinones in the respiratory chain. The immediate electron acceptor for the enzyme in this species is believed to be ubiquinone. Couples the redox reaction to proton translocation (for every two electrons transferred, four hydrogen ions are translocated across the cytoplasmic membrane), and thus conserves the redox energy in a proton gradient. This Buchnera aphidicola subsp. Cinara cedri (strain Cc) protein is NADH-quinone oxidoreductase subunit C/D.